A 126-amino-acid chain; its full sequence is Cytochrome c2 (126 aa).

Residues cysteine 17, cysteine 20, histidine 21, and methionine 101 each contribute to the heme c site.

This sequence belongs to the cytochrome c family. Binds 1 heme c group covalently per subunit.

Its subcellular location is the periplasm. Its function is as follows. Cytochrome c2 is found mainly in purple, non-sulfur, photosynthetic bacteria where it functions as the electron donor to the oxidized bacteriochlorophyll in the photophosphorylation pathway. However, it may also have a role in the respiratory chain and is found in some non-photosynthetic bacteria. The sequence is that of Cytochrome c2 from Rhodovulum adriaticum (Rhodopseudomonas adriatica).